A 29-amino-acid polypeptide reads, in one-letter code: Brevinin-2Td (29 aa).

A disulfide bridge connects residues Cys23 and Cys29.

It belongs to the frog skin active peptide (FSAP) family. Brevinin subfamily. In terms of tissue distribution, expressed by the skin glands.

It is found in the secreted. Functionally, antibacterial activity against representative Gram-negative and Gram-positive bacteria. The polypeptide is Brevinin-2Td (Rana temporaria (European common frog)).